The chain runs to 301 residues: MKFATGELYNRMFVGLIIDDEKIMDLQKAEKKLFELETIPGSLIECIAEGDKFVAHARQLAEWAKKPNDELGSFMYSLSEVKLHAPIPKPSKNIICIGKNYRDHAIEMGSEADIPEHPMVFTKSPVTVTGHGDIVKSHEEVTSQLDYEGELAVVIGKSGTRISKEDAYDHVFGYTIVNDITARDLQKRHKQFFIGKSLDTTCPMGPVLVHKSSIQEPERLKVETRVNGELRQSGSASDMIFSIPELIETLSKGMTLEAGDIIATGTPSGVGKGFTPPKFLRSGDKIDITIDPIGTLSNQIG.

Lysine 99 contributes to the oxalate binding site. The Mn(2+) site is built by glutamate 148, glutamate 150, and aspartate 179. Oxalate is bound by residues lysine 196 and threonine 266.

The protein belongs to the FAH family. Homodimer. The cofactor is Mg(2+). Mn(2+) serves as cofactor.

The protein resides in the cytoplasm. It carries out the reaction oxaloacetate = enol-oxaloacetate. It catalyses the reaction oxaloacetate + H(+) = pyruvate + CO2. Tautomerase that converts enol-oxaloacetate to the keto form of oxaloacetate. Also shows weak oxaloacetate decarboxylase (ODx), catalyzing the decarboxylation of oxaloacetate (OAA) to pyruvate and CO(2). This chain is Oxaloacetate tautomerase YisK, found in Bacillus subtilis (strain 168).